The sequence spans 632 residues: 1-deoxy-D-xylulose-5-phosphate synthase (632 aa).

Thiamine diphosphate is bound by residues histidine 75 and 117–119 (GHA). Aspartate 146 is a binding site for Mg(2+). Thiamine diphosphate-binding positions include 147–148 (AA), asparagine 175, and glutamate 370. Asparagine 175 contacts Mg(2+).

The protein belongs to the transketolase family. DXPS subfamily. Homodimer. Requires Mg(2+) as cofactor. The cofactor is thiamine diphosphate.

The catalysed reaction is D-glyceraldehyde 3-phosphate + pyruvate + H(+) = 1-deoxy-D-xylulose 5-phosphate + CO2. The protein operates within metabolic intermediate biosynthesis; 1-deoxy-D-xylulose 5-phosphate biosynthesis; 1-deoxy-D-xylulose 5-phosphate from D-glyceraldehyde 3-phosphate and pyruvate: step 1/1. In terms of biological role, catalyzes the acyloin condensation reaction between C atoms 2 and 3 of pyruvate and glyceraldehyde 3-phosphate to yield 1-deoxy-D-xylulose-5-phosphate (DXP). The sequence is that of 1-deoxy-D-xylulose-5-phosphate synthase from Chlamydia muridarum (strain MoPn / Nigg).